The sequence spans 176 residues: MKAYWYDNKPGDQREPHDSGRPVTVDYLASIGVQYYHFPSLESVNELAKERGYKNRDEIVVSPQAMGDVYEEKVKMFFNEHLHEDEEIRYIRDGEGYFDVRGQEDEWVRIKLAKDDLIILPAGIYHRFTTDDKNYVKAMRLFQEEPKWTPLNRGPDVDENSHRQSYLRTIQNKTVA.

Positions 1-21 are disordered; it reads MKAYWYDNKPGDQREPHDSGR. Residues 9–20 are compositionally biased toward basic and acidic residues; sequence KPGDQREPHDSG. The Fe(2+) site is built by histidine 81, histidine 83, glutamate 87, and histidine 126. The Ni(2+) site is built by histidine 81, histidine 83, glutamate 87, and histidine 126.

The protein belongs to the acireductone dioxygenase (ARD) family. Fe(2+) serves as cofactor. Requires Ni(2+) as cofactor.

Its subcellular location is the cytoplasm. The protein resides in the nucleus. The enzyme catalyses 1,2-dihydroxy-5-(methylsulfanyl)pent-1-en-3-one + O2 = 4-methylsulfanyl-2-oxobutanoate + formate + 2 H(+). The catalysed reaction is 1,2-dihydroxy-5-(methylsulfanyl)pent-1-en-3-one + O2 = 3-(methylsulfanyl)propanoate + CO + formate + 2 H(+). The protein operates within amino-acid biosynthesis; L-methionine biosynthesis via salvage pathway; L-methionine from S-methyl-5-thio-alpha-D-ribose 1-phosphate: step 5/6. Catalyzes 2 different reactions between oxygen and the acireductone 1,2-dihydroxy-3-keto-5-methylthiopentene (DHK-MTPene) depending upon the metal bound in the active site. Fe-containing acireductone dioxygenase (Fe-ARD) produces formate and 2-keto-4-methylthiobutyrate (KMTB), the alpha-ketoacid precursor of methionine in the methionine recycle pathway. Ni-containing acireductone dioxygenase (Ni-ARD) produces methylthiopropionate, carbon monoxide and formate, and does not lie on the methionine recycle pathway. This chain is Acireductone dioxygenase (adi1), found in Aspergillus fumigatus (strain ATCC MYA-4609 / CBS 101355 / FGSC A1100 / Af293) (Neosartorya fumigata).